The following is a 532-amino-acid chain: Bone morphogenetic protein receptor type-1A (532 aa).

The first 23 residues, 1-23 (MPQLYIYIRLLGAYLFIISRVQG), serve as a signal peptide directing secretion. At 24–152 (QNLDSMLHGT…IGPFFDGSIR (129 aa)) the chain is on the extracellular side. Cystine bridges form between Cys-61/Cys-82, Cys-63/Cys-67, and Cys-76/Cys-100. A glycan (N-linked (GlcNAc...) asparagine) is linked at Asn-73. The interval 107–109 (DFQ) is mediates specificity for BMP ligand. Disulfide bonds link Cys-110-Cys-124 and Cys-125-Cys-130. The helical transmembrane segment at 153-176 (WLVLLISMAVCIIAMIIFSSCFCY) threads the bilayer. Residues 177 to 532 (KHYCKSISSR…KMVESQDVKI (356 aa)) lie on the Cytoplasmic side of the membrane. In terms of domain architecture, GS spans 204-233 (ESLKDLIDQSQSSGSGSGLPLLVQRTIAKQ). The Protein kinase domain occupies 234–525 (IQMVRQVGKG…RIKKTLAKMV (292 aa)). Residues 240–248 (VGKGRYGEV) and Lys-261 each bind ATP. Asp-362 functions as the Proton acceptor in the catalytic mechanism.

Belongs to the protein kinase superfamily. TKL Ser/Thr protein kinase family. TGFB receptor subfamily. In terms of assembly, interacts with low affinity with GDF5; positively regulates chondrocyte differentiation. Interacts with BMP4. Interacts with SCUBE3. Interacts with TSC22D1/TSC-22. Interacts with BMP2; the interaction may induce HAMP expression. Interacts with BMP6. Interacts with heterodimers composed of BMP2 and BMP6 in vitro; the interaction may induce HAMP expression. Interacts with TGFBR3. Requires Mg(2+) as cofactor. Mn(2+) is required as a cofactor. Post-translationally, glycosylated. As to expression, highly expressed in skeletal muscle.

Its subcellular location is the cell membrane. The protein localises to the cell surface. It catalyses the reaction L-threonyl-[receptor-protein] + ATP = O-phospho-L-threonyl-[receptor-protein] + ADP + H(+). The enzyme catalyses L-seryl-[receptor-protein] + ATP = O-phospho-L-seryl-[receptor-protein] + ADP + H(+). Functionally, on ligand binding, forms a receptor complex consisting of two type II and two type I transmembrane serine/threonine kinases. Type II receptors phosphorylate and activate type I receptors which autophosphorylate, then bind and activate SMAD transcriptional regulators. Receptor for BMP2, BMP4, GDF5 and GDF6. Positively regulates chondrocyte differentiation through GDF5 interaction. Mediates induction of adipogenesis by GDF6. May promote the expression of HAMP, potentially via its interaction with BMP2. In Homo sapiens (Human), this protein is Bone morphogenetic protein receptor type-1A (BMPR1A).